Here is a 188-residue protein sequence, read N- to C-terminus: Peptidyl-tRNA hydrolase (188 aa).

Y16 lines the tRNA pocket. Catalysis depends on H21, which acts as the Proton acceptor. The tRNA site is built by F66, N68, and N114.

It belongs to the PTH family. As to quaternary structure, monomer.

Its subcellular location is the cytoplasm. The enzyme catalyses an N-acyl-L-alpha-aminoacyl-tRNA + H2O = an N-acyl-L-amino acid + a tRNA + H(+). Hydrolyzes ribosome-free peptidyl-tRNAs (with 1 or more amino acids incorporated), which drop off the ribosome during protein synthesis, or as a result of ribosome stalling. In terms of biological role, catalyzes the release of premature peptidyl moieties from peptidyl-tRNA molecules trapped in stalled 50S ribosomal subunits, and thus maintains levels of free tRNAs and 50S ribosomes. This Citrifermentans bemidjiense (strain ATCC BAA-1014 / DSM 16622 / JCM 12645 / Bem) (Geobacter bemidjiensis) protein is Peptidyl-tRNA hydrolase.